A 38-amino-acid polypeptide reads, in one-letter code: MRRKVKNTKRHQWRLTHSARSIKRANIMPSNPRGGRRF.

It belongs to the microviridae J protein family.

Its subcellular location is the virion. The protein localises to the host cytoplasm. In terms of biological role, mediates ssDNA packaging into virion, it locates to the internal surface of the capsid, thereby displacing the internal scaffolding protein during virion formation. Additionally, protein ORF8 plays a role in viral attachment to the host cell. The protein is DNA binding protein ORF8 of Spiroplasma melliferum (SpV4).